We begin with the raw amino-acid sequence, 426 residues long: Dihydroorotase (426 aa).

Histidine 58 and histidine 60 together coordinate Zn(2+). Substrate-binding positions include 60-62 and asparagine 92; that span reads HLR. Zn(2+) contacts are provided by aspartate 150, histidine 177, and histidine 230. Asparagine 276 lines the substrate pocket. Aspartate 303 contributes to the Zn(2+) binding site. Residue aspartate 303 is part of the active site. Substrate is bound by residues histidine 307 and 321–322; that span reads FG.

Belongs to the metallo-dependent hydrolases superfamily. DHOase family. Class I DHOase subfamily. The cofactor is Zn(2+).

It catalyses the reaction (S)-dihydroorotate + H2O = N-carbamoyl-L-aspartate + H(+). It participates in pyrimidine metabolism; UMP biosynthesis via de novo pathway; (S)-dihydroorotate from bicarbonate: step 3/3. Functionally, catalyzes the reversible cyclization of carbamoyl aspartate to dihydroorotate. The polypeptide is Dihydroorotase (Listeria welshimeri serovar 6b (strain ATCC 35897 / DSM 20650 / CCUG 15529 / CIP 8149 / NCTC 11857 / SLCC 5334 / V8)).